Consider the following 460-residue polypeptide: Argininosuccinate lyase (460 aa).

It belongs to the lyase 1 family. Argininosuccinate lyase subfamily.

It localises to the cytoplasm. The enzyme catalyses 2-(N(omega)-L-arginino)succinate = fumarate + L-arginine. It functions in the pathway amino-acid biosynthesis; L-arginine biosynthesis; L-arginine from L-ornithine and carbamoyl phosphate: step 3/3. The polypeptide is Argininosuccinate lyase (Lacticaseibacillus paracasei (strain ATCC 334 / BCRC 17002 / CCUG 31169 / CIP 107868 / KCTC 3260 / NRRL B-441) (Lactobacillus paracasei)).